A 770-amino-acid chain; its full sequence is Coiled-coil alpha-helical rod protein 1 (770 aa).

Coiled coils occupy residues Ser56–Ala289, Leu334–Gln420, and Gly476–Glu669. 4 disordered regions span residues Leu573–Gln592, Leu641–Arg672, Asn700–Cys721, and Ser744–Ser770. Positions Ala648–Arg672 are enriched in basic and acidic residues. A compositionally biased stretch (low complexity) spans Lys701–Cys721.

It localises to the cytoplasm. Its subcellular location is the nucleus. Functionally, may be a regulator of keratinocyte proliferation or differentiation. This Mus musculus (Mouse) protein is Coiled-coil alpha-helical rod protein 1 (Cchcr1).